Consider the following 170-residue polypeptide: Probable host range protein 2 (170 aa).

The disordered stretch occupies residues 145-170 (SDSDSDVDDRAELHKRNNDSDSDDYT). Over residues 152–163 (DDRAELHKRNND) the composition is skewed to basic and acidic residues.

The protein belongs to the poxviridae C7 protein family.

In terms of biological role, plays a role for multiplication of the virus in different cell types. The protein is Probable host range protein 2 of Bos taurus (Bovine).